The following is a 317-amino-acid chain: Lipoyl synthase (317 aa).

Cys55, Cys60, Cys66, Cys81, Cys85, Cys88, and Ser292 together coordinate [4Fe-4S] cluster. One can recognise a Radical SAM core domain in the interval 67–281 (WEDREATFLI…ERYATEIGFA (215 aa)).

The protein belongs to the radical SAM superfamily. Lipoyl synthase family. It depends on [4Fe-4S] cluster as a cofactor.

It localises to the cytoplasm. It catalyses the reaction [[Fe-S] cluster scaffold protein carrying a second [4Fe-4S](2+) cluster] + N(6)-octanoyl-L-lysyl-[protein] + 2 oxidized [2Fe-2S]-[ferredoxin] + 2 S-adenosyl-L-methionine + 4 H(+) = [[Fe-S] cluster scaffold protein] + N(6)-[(R)-dihydrolipoyl]-L-lysyl-[protein] + 4 Fe(3+) + 2 hydrogen sulfide + 2 5'-deoxyadenosine + 2 L-methionine + 2 reduced [2Fe-2S]-[ferredoxin]. It functions in the pathway protein modification; protein lipoylation via endogenous pathway; protein N(6)-(lipoyl)lysine from octanoyl-[acyl-carrier-protein]: step 2/2. Catalyzes the radical-mediated insertion of two sulfur atoms into the C-6 and C-8 positions of the octanoyl moiety bound to the lipoyl domains of lipoate-dependent enzymes, thereby converting the octanoylated domains into lipoylated derivatives. This is Lipoyl synthase from Mycolicibacterium gilvum (strain PYR-GCK) (Mycobacterium gilvum (strain PYR-GCK)).